The following is a 212-amino-acid chain: 3-isopropylmalate dehydratase small subunit (212 aa).

This sequence belongs to the LeuD family. LeuD type 1 subfamily. Heterodimer of LeuC and LeuD.

The enzyme catalyses (2R,3S)-3-isopropylmalate = (2S)-2-isopropylmalate. It functions in the pathway amino-acid biosynthesis; L-leucine biosynthesis; L-leucine from 3-methyl-2-oxobutanoate: step 2/4. Catalyzes the isomerization between 2-isopropylmalate and 3-isopropylmalate, via the formation of 2-isopropylmaleate. In Pseudomonas aeruginosa (strain UCBPP-PA14), this protein is 3-isopropylmalate dehydratase small subunit.